The sequence spans 477 residues: Lactate utilization protein B (477 aa).

4Fe-4S ferredoxin-type domains are found at residues 304 to 334 and 353 to 382; these read GTEF…GHSY and YDDY…LHEL. Residues Cys313, Cys316, Cys319, Cys323, Cys366, Cys369, and Cys373 each coordinate [4Fe-4S] cluster. The segment at 433–477 is disordered; that stretch reads KEDGKITKGPGPLKQWTQIRDFPAPNKSRFRDWFEDRRKEKGEDK. The span at 461–477 shows a compositional bias: basic and acidic residues; that stretch reads RFRDWFEDRRKEKGEDK.

Belongs to the LutB/YkgF family.

Functionally, is involved in L-lactate degradation and allows cells to grow with lactate as the sole carbon source. Has probably a role as an electron transporter during oxidation of L-lactate. The protein is Lactate utilization protein B of Bacillus licheniformis (strain ATCC 14580 / DSM 13 / JCM 2505 / CCUG 7422 / NBRC 12200 / NCIMB 9375 / NCTC 10341 / NRRL NRS-1264 / Gibson 46).